A 442-amino-acid polypeptide reads, in one-letter code: Histidinol dehydrogenase (442 aa).

The NAD(+) site is built by Tyr-142, Gln-204, and Asn-227. 3 residues coordinate substrate: Ser-250, Gln-272, and His-275. Zn(2+) is bound by residues Gln-272 and His-275. Active-site proton acceptor residues include Glu-340 and His-341. The substrate site is built by His-341, Asp-374, Glu-428, and His-433. Zn(2+) is bound at residue Asp-374. His-433 contacts Zn(2+).

It belongs to the histidinol dehydrogenase family. Requires Zn(2+) as cofactor.

The catalysed reaction is L-histidinol + 2 NAD(+) + H2O = L-histidine + 2 NADH + 3 H(+). The protein operates within amino-acid biosynthesis; L-histidine biosynthesis; L-histidine from 5-phospho-alpha-D-ribose 1-diphosphate: step 9/9. In terms of biological role, catalyzes the sequential NAD-dependent oxidations of L-histidinol to L-histidinaldehyde and then to L-histidine. The protein is Histidinol dehydrogenase of Prochlorococcus marinus (strain MIT 9313).